Here is a 155-residue protein sequence, read N- to C-terminus: uncharacterized protein (155 aa).

The N-terminal stretch at 1–19 is a signal peptide; that stretch reads MPLSKTLVQKLQQAGMAIA.

This is an uncharacterized protein from Haemophilus influenzae (strain ATCC 51907 / DSM 11121 / KW20 / Rd).